The following is a 425-amino-acid chain: Dihydroorotase (425 aa).

His59 and His61 together coordinate Zn(2+). Substrate contacts are provided by residues 61 to 63 and Asn93; that span reads HLR. Asp151, His178, and His231 together coordinate Zn(2+). Asn277 provides a ligand contact to substrate. Asp304 contributes to the Zn(2+) binding site. Asp304 is an active-site residue. Substrate contacts are provided by residues His308 and 322–323; that span reads FG.

This sequence belongs to the metallo-dependent hydrolases superfamily. DHOase family. Class I DHOase subfamily. Zn(2+) serves as cofactor.

The enzyme catalyses (S)-dihydroorotate + H2O = N-carbamoyl-L-aspartate + H(+). It participates in pyrimidine metabolism; UMP biosynthesis via de novo pathway; (S)-dihydroorotate from bicarbonate: step 3/3. Catalyzes the reversible cyclization of carbamoyl aspartate to dihydroorotate. This chain is Dihydroorotase, found in Staphylococcus epidermidis (strain ATCC 35984 / DSM 28319 / BCRC 17069 / CCUG 31568 / BM 3577 / RP62A).